We begin with the raw amino-acid sequence, 771 residues long: Assimilatory nitrate reductase electron transfer subunit (771 aa).

Position 43 to 79 (43 to 79) interacts with FAD; that stretch reads YNRILLSSVLQGEASLDDITLNSKDWYDKHGITLYTG. Cysteine 414, cysteine 416, cysteine 449, and cysteine 452 together coordinate [2Fe-2S] cluster.

It depends on FAD as a cofactor. Requires [2Fe-2S] cluster as cofactor.

Its function is as follows. Required for nitrate assimilation. In Bacillus subtilis (strain 168), this protein is Assimilatory nitrate reductase electron transfer subunit (nasB).